We begin with the raw amino-acid sequence, 145 residues long: UPF0179 protein Maeo_1037 (145 aa).

It belongs to the UPF0179 family.

This Methanococcus aeolicus (strain ATCC BAA-1280 / DSM 17508 / OCM 812 / Nankai-3) protein is UPF0179 protein Maeo_1037.